The chain runs to 484 residues: Aldehyde dehydrogenase family 3 member F1 (484 aa).

192–197 (GSPKIG) is an NAD(+) binding site. The active-site Proton acceptor is E214. C252 acts as the Nucleophile in catalysis.

The protein belongs to the aldehyde dehydrogenase family. In terms of assembly, homotetramer. In terms of tissue distribution, constituively expressed at low levels.

The catalysed reaction is an aldehyde + NAD(+) + H2O = a carboxylate + NADH + 2 H(+). This is Aldehyde dehydrogenase family 3 member F1 (ALDH3F1) from Arabidopsis thaliana (Mouse-ear cress).